A 369-amino-acid polypeptide reads, in one-letter code: Glutamate 5-kinase (369 aa).

ATP is bound at residue Lys9. Residues Ser49, Asp136, and Asn148 each contribute to the substrate site. ATP contacts are provided by residues 168-169 and 210-216; these read TD and TGGMLTK. A PUA domain is found at 275–355; the sequence is QGSIWVDKGA…KGVLIYRDDW (81 aa).

It belongs to the glutamate 5-kinase family.

The protein resides in the cytoplasm. The enzyme catalyses L-glutamate + ATP = L-glutamyl 5-phosphate + ADP. It participates in amino-acid biosynthesis; L-proline biosynthesis; L-glutamate 5-semialdehyde from L-glutamate: step 1/2. Functionally, catalyzes the transfer of a phosphate group to glutamate to form L-glutamate 5-phosphate. The chain is Glutamate 5-kinase from Streptococcus pneumoniae (strain 70585).